The primary structure comprises 152 residues: MGDEKSLAHTRWNCKYHIVFAPKYRRQAFYGEKRRAVGSILRKLCEWKNVRILEAECCADHIHMLLEIPPKMSVSSFMGYLKGKSSLMLYEQFGDLKFKYRNREFWCRGYYVDTVGKNTAKIQDYIKHQLEEDKMGEQLSIPYPGSPFTGRK.

2 residues coordinate Mg(2+): histidine 61 and histidine 63. Residue tyrosine 125 is the Nucleophile of the active site. A Mg(2+)-binding site is contributed by glutamine 129.

This sequence belongs to the transposase 17 family. Homodimer. It depends on Mg(2+) as a cofactor.

In terms of biological role, transposase responsible for transposition of the IS200 insertion sequence (IS) element. Transposition occurs in 2 main steps, excision from the donor DNA 'top strand' into a single strand circle and its subsequent reinsertion into the DNA target. This increases the copy number of the IS. The polypeptide is Transposase for insertion sequence element IS200 (tnpA1) (Salmonella typhi).